Here is a 125-residue protein sequence, read N- to C-terminus: Small ribosomal subunit protein uS12 (125 aa).

The disordered stretch occupies residues 1-24 (MPTISQLVRKPRKAKRTKSKVPAL). Residues 9–19 (RKPRKAKRTKS) show a composition bias toward basic residues. Position 89 is a 3-methylthioaspartic acid (Asp89). Residues 101-125 (SLDTAGVKDRKQARSKYGSKRPKSA) are disordered. Positions 113–125 (ARSKYGSKRPKSA) are enriched in basic residues.

It belongs to the universal ribosomal protein uS12 family. Part of the 30S ribosomal subunit. Contacts proteins S8 and S17. May interact with IF1 in the 30S initiation complex.

With S4 and S5 plays an important role in translational accuracy. Functionally, interacts with and stabilizes bases of the 16S rRNA that are involved in tRNA selection in the A site and with the mRNA backbone. Located at the interface of the 30S and 50S subunits, it traverses the body of the 30S subunit contacting proteins on the other side and probably holding the rRNA structure together. The combined cluster of proteins S8, S12 and S17 appears to hold together the shoulder and platform of the 30S subunit. In Nitrosomonas europaea (strain ATCC 19718 / CIP 103999 / KCTC 2705 / NBRC 14298), this protein is Small ribosomal subunit protein uS12.